The sequence spans 296 residues: MKLKRYLLVAKPGIIFGNLIAVAGGYFLAARGSVEPMLLLATVIGLSLVVASGCVLNNCIDRDIDRHMERTRGRVTVTGQISLKAALAHGLVLGVAGFGLLWWRTNPLTTALAGFGYFVYVGLYSLWFKRRSQYGTLVGSLSGAMPPVVGYCAVSGQFDAGAASLLAIFCLWQMPHSYAIAIFRLKDYEAAGIPVLPVARGIAVTKIHIVLYILAFMAATLALCLGGYAGYGYLLVAVAVSLWWLAIALTGYWTADDRVWARKLFAFSIVAITALSVMMSIDFQVAPATHLVASLF.

The next 9 membrane-spanning stretches (helical) occupy residues 7–27 (LLVAKPGIIFGNLIAVAGGYF), 36–56 (PMLLLATVIGLSLVVASGCVL), 83–103 (LKAALAHGLVLGVAGFGLLWW), 108–128 (LTTALAGFGYFVYVGLYSLWF), 134–154 (YGTLVGSLSGAMPPVVGYCAV), 163–183 (ASLLAIFCLWQMPHSYAIAIF), 207–227 (IHIVLYILAFMAATLALCLGG), 229–249 (AGYGYLLVAVAVSLWWLAIAL), and 265–285 (FAFSIVAITALSVMMSIDFQV).

Belongs to the UbiA prenyltransferase family. Protoheme IX farnesyltransferase subfamily.

It localises to the cell inner membrane. It carries out the reaction heme b + (2E,6E)-farnesyl diphosphate + H2O = Fe(II)-heme o + diphosphate. Its pathway is porphyrin-containing compound metabolism; heme O biosynthesis; heme O from protoheme: step 1/1. Converts heme B (protoheme IX) to heme O by substitution of the vinyl group on carbon 2 of heme B porphyrin ring with a hydroxyethyl farnesyl side group. The polypeptide is Protoheme IX farnesyltransferase 2 (Pseudomonas aeruginosa (strain UCBPP-PA14)).